The primary structure comprises 146 residues: Gonadotropin subunit beta-2 (146 aa).

A signal peptide spans 1–28 (TGTPVKILVVRNILLLLFCLVVLLVFAQ). 6 disulfides stabilise this stretch: C35/C83, C49/C98, C52/C136, C60/C114, C64/C116, and C119/C126. N39 carries N-linked (GlcNAc...) asparagine glycosylation.

The protein belongs to the glycoprotein hormones subunit beta family. As to quaternary structure, heterodimer of an alpha and a beta chain.

Its subcellular location is the secreted. Involved in gametogenesis and steroidogenesis. This is Gonadotropin subunit beta-2 (cgbb) from Ctenopharyngodon idella (Grass carp).